The chain runs to 522 residues: Insulinoma-associated protein 1 (522 aa).

Residues 1-12 show a composition bias toward basic residues; sequence MPRGFLVKRSKK. The tract at residues 1-20 is SNAG domain; it reads MPRGFLVKRSKKSTPVSYRI. Disordered stretches follow at residues 1–112 and 182–235; these read MPRG…SREH and AAEA…KPKA. The interval 2-7 is required and sufficient for interaction with KDM1A; it reads PRGFLV. Positions 43–57 are necessary for interaction with CCND1; the sequence is PPAPGPGPVPGPLQP. Over residues 43 to 61 the composition is skewed to pro residues; it reads PPAPGPGPVPGPLQPPPPT. Composition is skewed to low complexity over residues 66-75 and 212-228; these read AALAAALACA and ASAA…AKAP. Residues 277 to 297 form a C2H2-type 1; atypical zinc finger; that stretch reads FICQLCKEEYADPFALAQHKC. The C2H2-type 2 zinc finger occupies 305–327; it reads YRCPECAKVFSCPANLASHRRWH. Residues 325-373 form a disordered region; that stretch reads RWHKPRPAPAAARACEPETPARAEAREATGGGGSDRDTPSPGGVSESGS. Over residues 339–351 the composition is skewed to basic and acidic residues; that stretch reads CEPETPARAEARE. 3 consecutive C2H2-type zinc fingers follow at residues 378–400, 453–476, and 481–504; these read YECH…LLAH, HLCP…RLLH, and FPCK…NKCH.

The protein belongs to the INSM1 family. As to quaternary structure, interacts (via the N-terminal region) with CCND1 (via cyclin N-terminal domain); the interaction competes with the binding of CCND1 to CDK4 during cell cycle progression and increases its transcriptional repressor activity. Interacts with HDAC3; the interaction increases its transcriptional repressor activity. Interacts (via the SNAG domain) with HDAC1. Interacts (via the SNAG domain) with HDAC2. Interacts (via the SNAG domain) with KDM1A. Interacts (via the SNAG domain) with RCOR1. Interacts with SORBS1.

The protein resides in the nucleus. In terms of biological role, sequence-specific DNA-binding transcriptional regulator that plays a key role in neurogenesis and neuroendocrine cell differentiation during embryonic and/or fetal development. Binds to the consensus sequence 5'-[TG][TC][TC][TT][GA]GGG[CG]A-3' in target promoters. Acts as a transcriptional repressor of NEUROD1 and INS expression via its interaction with cyclin CCND1 in a cell cycle-independent manner. Negatively regulates skeletal muscle-specific gene expression in endocrine cells of the pituitary by inhibiting the Notch signaling pathway. Represses target gene transcription by recruiting chromatin-modifying factors, such as HDAC1, HDAC2, HDAC3, KDM1A and RCOR1 histone deacetylases. Binds to its own promoter, suggesting autoregulation as a self-control feedback mechanism. Competes with histone H3 for the same binding site on the histone demethylase complex formed by KDM1A and RCOR1, and thereby inhibits demethylation of histone H3 at 'Lys-4'. Promotes the generation and expansion of neuronal basal progenitor cells in the developing neocortex. Involved in the differentiation of endocrine cells of the developing anterior pituitary gland, of the pancreas and intestine, and of sympatho-adrenal cells in the peripheral nervous system. Promotes cell cycle signaling arrest and inhibition of cellular proliferation. This Bos taurus (Bovine) protein is Insulinoma-associated protein 1 (INSM1).